The chain runs to 205 residues: Putative 3-methyladenine DNA glycosylase (205 aa).

The protein belongs to the DNA glycosylase MPG family.

This is Putative 3-methyladenine DNA glycosylase from Clostridium perfringens (strain 13 / Type A).